Here is a 1072-residue protein sequence, read N- to C-terminus: Rho family-interacting cell polarization regulator 2 (1072 aa).

Residues 83–112 (NGLDEYLEVHQTELDKLTAQLKDMRRNSRL) adopt a coiled-coil conformation. The interval 173–470 (RESLTEINRS…ATTATQHRAR (298 aa)) is necessary for interaction with NCAM and myoblast protrusion formation. Disordered stretches follow at residues 439-465 (DRVP…TTAT) and 683-718 (EVEK…AGSP). Positions 447–460 (AEPSSAHVTSSPDI) are enriched in polar residues. The span at 683 to 698 (EVEKNSYRTEHPEARG) shows a compositional bias: basic and acidic residues.

This sequence belongs to the RIPOR family. As to quaternary structure, homooligomer; homooligomerization is regulated by RHOC and leads to the formation of concatemers through the association of N- and C-termini. Interacts with NCAM; this interaction is necessary for myoblast protrusion formation. As to expression, expressed in myoblast and myotubes (at protein level). Expressed in brain, eyes and skeletal muscle.

The protein resides in the cytoplasm. Its subcellular location is the cytoskeleton. The protein localises to the cell projection. It localises to the filopodium. It is found in the apical cell membrane. The protein resides in the stereocilium. Its subcellular location is the stereocilium membrane. Functionally, acts as an inhibitor of the small GTPase RHOA and plays several roles in the regulation of myoblast and hair cell differentiation, lymphocyte T proliferation and neutrophil polarization. Plays a role in fetal mononuclear myoblast differentiation by promoting filopodia and myotube formation. Maintains naive T lymphocytes in a quiescent state and prevents chemokine-induced T lymphocyte responses, such as cell adhesion, polarization and migration. Involved also in the regulation of neutrophil polarization, chemotaxis and adhesion. Required for normal development of inner and outer hair cell stereocilia within the cochlea of the inner ear. Plays a role for maintaining the structural organization of the basal domain of stereocilia. Involved in mechanosensory hair cell function. Required for normal hearing. The protein is Rho family-interacting cell polarization regulator 2 of Coturnix japonica (Japanese quail).